Consider the following 77-residue polypeptide: Large ribosomal subunit protein bL28 (77 aa).

The protein belongs to the bacterial ribosomal protein bL28 family.

The polypeptide is Large ribosomal subunit protein bL28 (Polaromonas naphthalenivorans (strain CJ2)).